The chain runs to 94 residues: Co-chaperonin GroES (94 aa).

Belongs to the GroES chaperonin family. Heptamer of 7 subunits arranged in a ring. Interacts with the chaperonin GroEL.

It localises to the cytoplasm. In terms of biological role, together with the chaperonin GroEL, plays an essential role in assisting protein folding. The GroEL-GroES system forms a nano-cage that allows encapsulation of the non-native substrate proteins and provides a physical environment optimized to promote and accelerate protein folding. GroES binds to the apical surface of the GroEL ring, thereby capping the opening of the GroEL channel. This chain is Co-chaperonin GroES, found in Streptococcus pneumoniae (strain Taiwan19F-14).